The sequence spans 351 residues: MPGAAAKGSELSERIEGFVETLKRGGGQRSSEDMARETLGLLRRLITDHHWNNAGDLMDLIRREGRRMTAAQPSETTVGNMVRRVLKIIREEYGRLHGRSDESDQQESLHKLLTSGGLSEDFSFHFAPLKANIIEAINELLVELEGTMENIAAQALEHIHSNEVIMTIGYSRTVEAFLKEAARKRKFHVIVAECAPFCQGHEMAVNLSKEGIETTVMTDAAIFAVMSRVNKVIIGTKTILANGSLRAVAGTHTLALAAKHHSTPLIVCAPMFKLSPQFPSEEDSFHKFVAPEEVLPFTEGDILEKVSVHCPVFDYVPPDLITLFISNIGGNAPSYIYRLMSELYHPDDHVL.

It belongs to the eIF-2B alpha/beta/delta subunits family. As to quaternary structure, component of the translation initiation factor 2B (eIF2B) complex which is a heterodecamer of two sets of five different subunits: alpha, beta, gamma, delta and epsilon. Subunits alpha, beta and delta comprise a regulatory subcomplex and subunits epsilon and gamma comprise a catalytic subcomplex. Within the complex, the hexameric regulatory complex resides at the center, with the two heterodimeric catalytic subcomplexes bound on opposite sides.

It is found in the cytoplasm. It localises to the cytosol. With respect to regulation, activated by the chemical integrated stress response (ISR) inhibitor ISRIB which stimulates guanine nucleotide exchange factor activity for both phosphorylated and unphosphorylated eIF2. Its function is as follows. Acts as a component of the translation initiation factor 2B (eIF2B) complex, which catalyzes the exchange of GDP for GTP on eukaryotic initiation factor 2 (eIF2) gamma subunit. Its guanine nucleotide exchange factor activity is repressed when bound to eIF2 complex phosphorylated on the alpha subunit, thereby limiting the amount of methionyl-initiator methionine tRNA available to the ribosome and consequently global translation is repressed. The sequence is that of Translation initiation factor eIF2B subunit beta (Eif2b2) from Mus musculus (Mouse).